The primary structure comprises 402 residues: AA9 family lytic polysaccharide monooxygenase E (402 aa).

The signal sequence occupies residues 1-16 (MSRLVSFASLLAAVNA). Cu(2+) is bound at residue His-17. 2 disulfides stabilise this stretch: Cys-72–Cys-194 and Cys-113–Cys-117. An N-linked (GlcNAc...) asparagine glycan is attached at Asn-75. His-102 is a binding site for Cu(2+). Residue Asn-154 is glycosylated (N-linked (GlcNAc...) asparagine). Residues His-180 and Gln-189 each contribute to the O2 site. Tyr-191 contributes to the Cu(2+) binding site. One can recognise a CBM1 domain in the interval 364 to 400 (GSNPLYAQCGGLNFKGASGCVAGATCKKMNPYYSQCV).

This sequence belongs to the polysaccharide monooxygenase AA9 family. Requires Cu(2+) as cofactor.

It is found in the secreted. The enzyme catalyses [(1-&gt;4)-beta-D-glucosyl]n+m + reduced acceptor + O2 = 4-dehydro-beta-D-glucosyl-[(1-&gt;4)-beta-D-glucosyl]n-1 + [(1-&gt;4)-beta-D-glucosyl]m + acceptor + H2O.. In terms of biological role, lytic polysaccharide monooxygenase (LPMO) that depolymerizes crystalline and amorphous polysaccharides via the oxidation of scissile alpha- or beta-(1-4)-glycosidic bonds, yielding C1 or C4 oxidation products. Catalysis by LPMOs requires the reduction of the active-site copper from Cu(II) to Cu(I) by a reducing agent and H(2)O(2) or O(2) as a cosubstrate. This chain is AA9 family lytic polysaccharide monooxygenase E, found in Emericella nidulans (strain FGSC A4 / ATCC 38163 / CBS 112.46 / NRRL 194 / M139) (Aspergillus nidulans).